Consider the following 1759-residue polypeptide: Putative ATP-dependent RNA helicase TDRD12 (1759 aa).

Residues 74-153 form the Tudor 1 domain; sequence FQNLEQVWFS…KLSNTETRAV (80 aa). Residues 480–495 are compositionally biased toward low complexity; that stretch reads NSAASESSTKSSMDSS. The disordered stretch occupies residues 480 to 506; the sequence is NSAASESSTKSSMDSSRISDEDDLSSD. The region spanning 611–789 is the Helicase ATP-binding domain; it reads WGTILRGLST…DFLEPIVLKA (179 aa). 624-631 lines the ATP pocket; the sequence is SPPRSGKT. One can recognise a Helicase C-terminal domain in the interval 823-980; that stretch reads NVLQFIDSVQ…NVPKILDEVS (158 aa). The 60-residue stretch at 1335 to 1394 folds into the Tudor 2 domain; that stretch reads GSNVGDIVLAKFPDDSMYERARIDHIYSEDKVKCFFVDQGDWRDVSTNDLATITENFITQ. The 87-residue stretch at 1618–1704 folds into the CS domain; it reads LSKPKICWSQ…LMCRNWLALT (87 aa).

Interacts (via Tudor domain 2) with Siwi. Component of the PET complex, at least composed of EXD1, SIWI, TDRD12 and piRNAs. In terms of tissue distribution, expressed in the yolk cells. Not detected in yolk granules.

It localises to the chromosome. Its subcellular location is the cytoplasm. It is found in the cytosol. The protein resides in the nucleus membrane. The catalysed reaction is ATP + H2O = ADP + phosphate + H(+). Its function is as follows. Probable ATP-binding RNA helicase required during spermatogenesis to repress transposable elements and preventing their mobilization, which is essential for the germline integrity. Acts via the piRNA metabolic process, which mediates the repression of transposable elements during meiosis by forming complexes composed of piRNAs and Piwi proteins and governs the methylation and subsequent repression of transposons. The chain is Putative ATP-dependent RNA helicase TDRD12 (TDRD12) from Bombyx mori (Silk moth).